The following is a 525-amino-acid chain: Protein shisa-6 (525 aa).

An N-terminal signal peptide occupies residues 1-30 (MALRRLLLPPLLLSLLLSLASLHLPPGADA). The Extracellular segment spans residues 31–180 (ARGRSGNRTL…NKYDPEKDKT (150 aa)). Residues Asn37 and Asn62 are each glycosylated (N-linked (GlcNAc...) asparagine). A helical transmembrane segment spans residues 181-201 (NFTVYITCGVIAFVIVAGVFA). The Cytoplasmic segment spans residues 202 to 525 (KVSYDKAHRP…YTASKTEVTV (324 aa)). The disordered stretch occupies residues 241-294 (ISAIDTSPKENTPVRSTSKNHYTPVRTAKQTPGDRQYNHPILSSATQTPTHEKP). The segment covering 243-261 (AIDTSPKENTPVRSTSKNH) has biased composition (polar residues). A phosphoserine mark is found at Ser416, Ser422, and Ser434. The residue at position 458 (Thr458) is a Phosphothreonine. The interval 469 to 495 (MHSHPSASNNSYATLGQSQTAAKRHAF) is disordered. Residues 473-489 (PSASNNSYATLGQSQTA) are compositionally biased toward polar residues. Position 502 is a phosphothreonine (Thr502). The short motif at 522–525 (EVTV) is the PDZ-binding element.

Belongs to the shisa family. As to quaternary structure, component of the postsynaptic hippocampal AMPA-type glutamate receptor (AMPAR) complex, at least composed of pore forming AMPAR subunits GRIA1, GRIA2 and GRIA3 and AMPAR auxiliary proteins SHISA6 and SHISA7. Interacts (via PDZ-binding motif) with DLG4/PSD-95 (via PDZ domain); the interaction is direct. Post-translationally, N-glycosylated. Highly expressed in cerebellum and hippocampal neurons: CA1 stratum oriens and stratum radiatum, CA3 stratum oriens and stratum lucidum, and the dentate gyrus polymorphic layer. Expressed in other brain structures including olfactory bulb, cortex, amygdala and midbrain (at protein level). Also expressed in a subset of spermatogonial stem cells. Also expressed in eye, heart, kidney, lung, muscle and spleen. Isoform 2: Specifically expressed in hippocampus.

The protein resides in the postsynaptic density membrane. Functionally, involved in maintenance of high-frequency synaptic transmission at hippocampal CA3-CA1 synapses. Regulates AMPA-type glutamate receptor (AMPAR) immobilization at postsynaptic density keeping the channels in an activated state in the presence of glutamate and preventing synaptic depression. May play a role in self-renewal and differentiation of spermatogonial stem cells by inhibiting canonical Wnt signaling pathway. The polypeptide is Protein shisa-6 (Mus musculus (Mouse)).